The chain runs to 229 residues: Potassium/proton antiporter CemA (229 aa).

Transmembrane regions (helical) follow at residues Ala-6–Cys-26, Ile-107–Gly-127, and Ile-189–Ile-209.

It belongs to the CemA family.

Its subcellular location is the plastid. The protein resides in the chloroplast inner membrane. The enzyme catalyses K(+)(in) + H(+)(out) = K(+)(out) + H(+)(in). Contributes to K(+)/H(+) antiport activity by supporting proton efflux to control proton extrusion and homeostasis in chloroplasts in a light-dependent manner to modulate photosynthesis. Prevents excessive induction of non-photochemical quenching (NPQ) under continuous-light conditions. Indirectly promotes efficient inorganic carbon uptake into chloroplasts. This is Potassium/proton antiporter CemA from Lepidium virginicum (Virginia pepperweed).